The sequence spans 646 residues: MLFVLELFSHYVLHFERYFILSRQSTLLIQWSIVVLAGLYLLVHHPKINRQRTMFLAGVILRIVLLAGVSVELIHQVQSTNFTSAYLREDGKELLPLLHFLLYGYVLLTAFHYMLMPRDHGGKGKFYTFDLAVVSLPIVQMIFSFFSYWKEYPDGMEPIAFVFLFFIITLPIALNVVFFKLYWRTDKILLGLFYTLIIGLLVLLLAPYPNQISKDYGAVMPYTIYLAMAGFLMSYHLFQKSGKVYVRVNKWVTMAVMVFFVLLLNPIYNIGTAAFAVSKPANVHDSFNFVGEHISSEKAEQILKSFFPTDETLYLHDTNMDVHYFYSFESKGYKAEVDEVSQLIRNYEYLQKAHGKKLTNQEYKRKSIAFLERHGRVLHKDHIETKVSQEDGQTVVRIYLKNQLHKKDHADDGAVFYWEKETLMGFSEDPSIYQLDSLLHVHITEQDIHDKVEQMFTALNISKQPYQITDIESDSLLGSMVRVETKVGIVLEFEGESGCLHSLSLPMKKNISMANSRLQHQILSIFDARGSEKKKKSSQGDMVMYTDSSKTYEFVEAQGQLNVYVYSDTPDQSFPYTYRNGTLAYEKVASLYQDVIYKKRMRPIIVQRGDERHYAWLIIIQPFGSNRHDAYVVDGETQEVKSLYES.

8 consecutive transmembrane segments (helical) span residues 20–42 (ILSRQSTLLIQWSIVVLAGLYLL), 55–77 (FLAGVILRIVLLAGVSVELIHQV), 97–115 (LLHFLLYGYVLLTAFHYML), 127–149 (YTFDLAVVSLPIVQMIFSFFSYW), 159–181 (IAFVFLFFIITLPIALNVVFFKL), 188–206 (ILLGLFYTLIIGLLVLLLA), 216–238 (YGAVMPYTIYLAMAGFLMSYHLF), and 251–273 (WVTMAVMVFFVLLLNPIYNIGTA).

It is found in the cell membrane. This is an uncharacterized protein from Bacillus subtilis (strain 168).